A 509-amino-acid polypeptide reads, in one-letter code: Dol-P-Glc:Glc(2)Man(9)GlcNAc(2)-PP-Dol alpha-1,2-glucosyltransferase (509 aa).

The Cytoplasmic portion of the chain corresponds to 1–4 (MGKL). The chain crosses the membrane as a helical span at residues 5–25 (AVAAITSLWVIPMSIIVNHIV). Over 26–57 (PEPYMDEIFHVPQAQQYCNGNFRSWDPMITTP) the chain is Lumenal. The chain crosses the membrane as a helical span at residues 58-78 (PGLYYLSLAHVASLFPGMLLM). Residues 79-99 (ENTSQSFSEACSTSVLRSTNA) lie on the Cytoplasmic side of the membrane. Residues 100 to 120 (VSAVLCGVLVYEIIRFLGPNL) form a helical membrane-spanning segment. Over 121-124 (SDRK) the chain is Lumenal. The helical transmembrane segment at 125–145 (ATFMALVMSLYPLHWFFTFLY) threads the bilayer. Topologically, residues 146 to 170 (YTDVASLTAVLAMYLTCLKRRYVLS) are cytoplasmic. The chain crosses the membrane as a helical span at residues 171 to 191 (ALFGTLAVFIRQTNVVWMLFV). The Lumenal segment spans residues 192–285 (ACSGILDFTL…KWRILIKFSP (94 aa)). A disordered region spans residues 210 to 254 (QEVNQELHQSSNKKGATLRSNLRKRKSDISSDTSDPFNHGQTVPS). Composition is skewed to polar residues over residues 215 to 229 (ELHQ…TLRS) and 239 to 254 (SSDT…TVPS). Residues 286 to 306 (FIFVVVAFGIFILWNGGIVLG) traverse the membrane as a helical segment. Residues 307–311 (AKEAH) are Cytoplasmic-facing. A helical transmembrane segment spans residues 312-332 (VVSLHFAQIMYFSLVSALFTA). The Lumenal portion of the chain corresponds to 333-355 (PLHFSVNQLRHQFHQLHRNWSLS). An N-linked (GlcNAc...) asparagine glycan is attached at Asn-351. A helical membrane pass occupies residues 356 to 376 (LILTLVALVAGFVSVHFFSLA). Residues 377 to 400 (HPYLLADNRHYPFYLWRKIINAHW) are Cytoplasmic-facing. A helical membrane pass occupies residues 401–421 (LMKYILVPVYVYSWFSILTLL). Over 422-428 (AKTRRQT) the chain is Lumenal. Residues 429–449 (WILVYFLATCGVLVPTPLIEF) traverse the membrane as a helical segment. Residues 450–472 (RYYTIPFYLFMLHSCVRSSSFAT) lie on the Cytoplasmic side of the membrane. The helical transmembrane segment at 473–493 (WLLIGTIFVSINVFTMAMFLF) threads the bilayer. The Lumenal segment spans residues 494–509 (RPFKWSHEDGVQRFIW).

This sequence belongs to the ALG10 glucosyltransferase family.

It localises to the endoplasmic reticulum membrane. It catalyses the reaction an alpha-D-Glc-(1-&gt;3)-alpha-D-Glc-(1-&gt;3)-alpha-D-Man-(1-&gt;2)-alpha-D-Man-(1-&gt;2)-alpha-D-Man-(1-&gt;3)-[alpha-D-Man-(1-&gt;2)-alpha-D-Man-(1-&gt;3)-[alpha-D-Man-(1-&gt;2)-alpha-D-Man-(1-&gt;6)]-alpha-D-Man-(1-&gt;6)]-beta-D-Man-(1-&gt;4)-beta-D-GlcNAc-(1-&gt;4)-alpha-D-GlcNAc-diphospho-di-trans,poly-cis-dolichol + a di-trans,poly-cis-dolichyl beta-D-glucosyl phosphate = a alpha-D-Glc-(1-&gt;2)-alpha-D-Glc-(1-&gt;3)-alpha-D-Glc-(1-&gt;3)-alpha-D-Man-(1-&gt;2)-alpha-D-Man-(1-&gt;2)-alpha-D-Man-(1-&gt;3)-[alpha-D-Man-(1-&gt;2)-alpha-D-Man-(1-&gt;3)-[alpha-D-Man-(1-&gt;2)-alpha-D-Man-(1-&gt;6)]-alpha-D-Man-(1-&gt;6)]-beta-D-Man-(1-&gt;4)-beta-D-GlcNAc-(1-&gt;4)-alpha-D-GlcNAc-diphospho-di-trans,poly-cis-dolichol + a di-trans,poly-cis-dolichyl phosphate + H(+). Its pathway is protein modification; protein glycosylation. Dol-P-Glc:Glc(2)Man(9)GlcNAc(2)-PP-Dol alpha-1,2-glucosyltransferase that operates in the biosynthetic pathway of dolichol-linked oligosaccharides, the glycan precursors employed in protein asparagine (N)-glycosylation. The assembly of dolichol-linked oligosaccharides begins on the cytosolic side of the endoplasmic reticulum membrane and finishes in its lumen. The sequential addition of sugars to dolichol pyrophosphate produces dolichol-linked oligosaccharides containing fourteen sugars, including two GlcNAcs, nine mannoses and three glucoses. Once assembled, the oligosaccharide is transferred from the lipid to nascent proteins by oligosaccharyltransferases. In the lumen of the endoplasmic reticulum, adds the third and last glucose residue from dolichyl phosphate glucose (Dol-P-Glc) onto the lipid-linked oligosaccharide intermediate Glc(2)Man(9)GlcNAc(2)-PP-Dol to produce Glc(3)Man(9)GlcNAc(2)-PP-Dol. This Arabidopsis thaliana (Mouse-ear cress) protein is Dol-P-Glc:Glc(2)Man(9)GlcNAc(2)-PP-Dol alpha-1,2-glucosyltransferase.